We begin with the raw amino-acid sequence, 337 residues long: Ketol-acid reductoisomerase (NADP(+)) (337 aa).

A KARI N-terminal Rossmann domain is found at 3-183; sequence VEMFYDDDAD…GGARAGVIKT (181 aa). NADP(+) is bound by residues 26-29, Lys-49, Ser-52, Ser-54, and 84-87; these read YGSQ and DTAQ. Residue His-109 is part of the active site. Gly-135 serves as a coordination point for NADP(+). In terms of domain architecture, KARI C-terminal knotted spans 184-329; sequence TFKEETETDL…KKLRDLMSWV (146 aa). Asp-192, Glu-196, Glu-228, and Glu-232 together coordinate Mg(2+). A substrate-binding site is contributed by Ser-253.

Belongs to the ketol-acid reductoisomerase family. Requires Mg(2+) as cofactor.

The enzyme catalyses (2R)-2,3-dihydroxy-3-methylbutanoate + NADP(+) = (2S)-2-acetolactate + NADPH + H(+). The catalysed reaction is (2R,3R)-2,3-dihydroxy-3-methylpentanoate + NADP(+) = (S)-2-ethyl-2-hydroxy-3-oxobutanoate + NADPH + H(+). It participates in amino-acid biosynthesis; L-isoleucine biosynthesis; L-isoleucine from 2-oxobutanoate: step 2/4. The protein operates within amino-acid biosynthesis; L-valine biosynthesis; L-valine from pyruvate: step 2/4. Functionally, involved in the biosynthesis of branched-chain amino acids (BCAA). Catalyzes an alkyl-migration followed by a ketol-acid reduction of (S)-2-acetolactate (S2AL) to yield (R)-2,3-dihydroxy-isovalerate. In the isomerase reaction, S2AL is rearranged via a Mg-dependent methyl migration to produce 3-hydroxy-3-methyl-2-ketobutyrate (HMKB). In the reductase reaction, this 2-ketoacid undergoes a metal-dependent reduction by NADPH to yield (R)-2,3-dihydroxy-isovalerate. The polypeptide is Ketol-acid reductoisomerase (NADP(+)) (Mycolicibacterium smegmatis (strain ATCC 700084 / mc(2)155) (Mycobacterium smegmatis)).